The sequence spans 335 residues: Putative zinc metalloprotease CPE1693 (335 aa).

Zn(2+) is bound at residue histidine 17. Glutamate 18 is a catalytic residue. Histidine 21 serves as a coordination point for Zn(2+). The next 3 membrane-spanning stretches (helical) occupy residues 88–110 (ILVM…IGLA), 262–284 (LLWF…FPAL), and 312–334 (TVGF…IFPI). The PDZ domain occupies 96–174 (FMNYVLALII…PVELEIKRGN (79 aa)).

The protein belongs to the peptidase M50B family. The cofactor is Zn(2+).

It localises to the cell membrane. The polypeptide is Putative zinc metalloprotease CPE1693 (Clostridium perfringens (strain 13 / Type A)).